The chain runs to 180 residues: ATP-dependent protease subunit HslV (180 aa).

The active site involves Thr5. Residues Gly165, Cys168, and Thr171 each contribute to the Na(+) site.

This sequence belongs to the peptidase T1B family. HslV subfamily. In terms of assembly, a double ring-shaped homohexamer of HslV is capped on each side by a ring-shaped HslU homohexamer. The assembly of the HslU/HslV complex is dependent on binding of ATP.

It localises to the cytoplasm. The enzyme catalyses ATP-dependent cleavage of peptide bonds with broad specificity.. With respect to regulation, allosterically activated by HslU binding. Protease subunit of a proteasome-like degradation complex believed to be a general protein degrading machinery. This is ATP-dependent protease subunit HslV from Helicobacter pylori (strain HPAG1).